Consider the following 169-residue polypeptide: Translationally-controlled tumor protein homolog (169 aa).

The TCTP domain maps to 1 to 169 (MIIYKDIVSG…FKDGLEEEKF (169 aa)).

The protein belongs to the TCTP family.

The protein localises to the cytoplasm. Functionally, involved in calcium binding and microtubule stabilization. The polypeptide is Translationally-controlled tumor protein homolog (Branchiostoma belcheri (Amphioxus)).